Here is a 488-residue protein sequence, read N- to C-terminus: Glutamyl-tRNA(Gln) amidotransferase subunit A (488 aa).

Residues lysine 77 and serine 152 each act as charge relay system in the active site. The active-site Acyl-ester intermediate is serine 176.

This sequence belongs to the amidase family. GatA subfamily. In terms of assembly, heterotrimer of A, B and C subunits.

It carries out the reaction L-glutamyl-tRNA(Gln) + L-glutamine + ATP + H2O = L-glutaminyl-tRNA(Gln) + L-glutamate + ADP + phosphate + H(+). Its function is as follows. Allows the formation of correctly charged Gln-tRNA(Gln) through the transamidation of misacylated Glu-tRNA(Gln) in organisms which lack glutaminyl-tRNA synthetase. The reaction takes place in the presence of glutamine and ATP through an activated gamma-phospho-Glu-tRNA(Gln). The protein is Glutamyl-tRNA(Gln) amidotransferase subunit A of Streptococcus gordonii (strain Challis / ATCC 35105 / BCRC 15272 / CH1 / DL1 / V288).